The sequence spans 503 residues: Pre-glycoprotein polyprotein GP complex (503 aa).

Residue G2 is the site of N-myristoyl glycine; by host attachment. Over 2–17 (GQIVTLIQSIPEVLQE) the chain is Extracellular. A helical membrane pass occupies residues 18-33 (VFNVALIIVSVLCIVK). The Cytoplasmic segment spans residues 34-58 (GFVNLMRCGLFQLVTFLILSGRSCD). Position 57 (C57) interacts with Zn(2+). At 59–446 (SMMIDRRHNL…QGKTPLALTD (388 aa)) the chain is on the extracellular side. 4 disulfides stabilise this stretch: C86–C248, C293–C306, C315–C324, and C378–C399. N-linked (GlcNAc...) asparagine; by host glycans are attached at residues N89, N111, N181, and N241. Residues N379, N387, N404, and N409 are each glycosylated (N-linked (GlcNAc...) asparagine; by host). The helical transmembrane segment at 447–467 (ICFWSLVFYTITVFLHIVGIP) threads the bilayer. Residues 468–503 (THRHIIGDGCPKPHRITRNSLCSCGYYKYQRNLTNG) lie on the Cytoplasmic side of the membrane. Positions 469, 471, 477, 481, 489, and 491 each coordinate Zn(2+).

The protein belongs to the arenaviridae GPC protein family. In terms of assembly, interacts with glycoprotein G2. Part of the GP complex (GP-C) together with glycoprotein G1 and glycoprotein G2. The GP-complex interacts with protein Z, which interacts with ribonucleocapsid; these interactions may induce virion budding. Homotrimer; disulfide-linked. In pre-fusion state, G1 homotrimers bind G2 homotrimers via ionic interactions. Part of the GP complex (GP-C) together with glycoprotein G2 and the stable signal peptide. The GP-complex interacts with protein Z, which interacts with ribonucleocapsid; these interactions may induce virion budding. As to quaternary structure, homotrimer. Interacts with the stable signal peptide. In pre-fusion state, G2 homotrimers bind G1 homotrimers via ionic interactions. Part of the GP complex (GP-C) together with glycoprotein G1 and the stable signal peptide. Acidification in the endosome triggers rearrangements, which ultimately leads to a 6 helix bundle formed by the two heptad repeat domains (HR1 and HR2) in post-fusion state. The GP-complex interacts with protein Z, which interacts with ribonucleocapsid; these interactions may induce virion budding. In terms of processing, specific enzymatic cleavages in vivo yield mature proteins. GP-C polyprotein is cleaved in the endoplasmic reticulum by the host protease MBTPS1. Only cleaved glycoprotein is incorporated into virions. The SSP remains stably associated with the GP complex following cleavage by signal peptidase and plays crucial roles in the trafficking of GP through the secretory pathway. Post-translationally, myristoylation is necessary for GP2-mediated fusion activity.

The protein localises to the virion membrane. It is found in the host endoplasmic reticulum membrane. It localises to the host Golgi apparatus membrane. Its subcellular location is the host cell membrane. Functions as a cleaved signal peptide that is retained as the third component of the GP complex (GP-C). Helps to stabilize the spike complex in its native conformation. The SSP is required for efficient glycoprotein expression, post-translational maturation cleavage of G1 and G2, glycoprotein transport to the cell surface plasma membrane, formation of infectious virus particles, and acid pH-dependent glycoprotein-mediated cell fusion. Functionally, forms the virion spikes together with glycoprotein G2. The glycoprotein spike trimers are connected to the underlying matrix. Interacts with the host receptor leading to virus endocytosis. In terms of biological role, forms the virion spikes together with glycoprotein G1. The glycoprotein spike trimers are connected to the underlying matrix. Class I viral fusion protein that directs fusion of viral and host endosomal membranes, leading to delivery of the nucleocapsid into the cytoplasm. Membrane fusion is mediated by irreversible conformational changes induced by acidification. The protein is Pre-glycoprotein polyprotein GP complex of Cavia cutleri (Guinea pig).